The primary structure comprises 175 residues: Apoptosis regulatory protein Siva (175 aa).

Phosphotyrosine; by ABL2 is present on Tyr34. The interaction with BCL2L1 isoform Bcl-x(L) and inhibition of BCL2L1 anti-apoptotic activity stretch occupies residues 36 to 55 (QEVFEKTKRLLFLGAQAYLD). Phosphoserine is present on Ser70. An interaction with coxsackievirus B3 VP2 region spans residues 105-123 (DPSGVASIACSSCVRAVDG).

As to quaternary structure, binds through its N-terminal region to the C-terminus of CD27 and to PXMP2/PMP22. Binds to the C-terminus of TNFRSF18/GITR. Isoform 1 binds to BCL2L1/BCLX isoform Bcl-x(L) but not to BAX. (Microbial infection) Interacts with coxsackievirus B3 capsid protein VP2; this interaction inhibits the binding of SIVA1 to CD27. The cofactor is Zn(2+). Phosphorylated by ABL2/ARG in response to oxidative stress. In terms of tissue distribution, ubiquitous. Mostly expressed in thymus, testis, ovary, prostate, small intestine and spleen and less in colon.

The protein resides in the cytoplasm. It localises to the nucleus. Functionally, induces CD27-mediated apoptosis. Inhibits BCL2L1 isoform Bcl-x(L) anti-apoptotic activity. Inhibits activation of NF-kappa-B and promotes T-cell receptor-mediated apoptosis. This is Apoptosis regulatory protein Siva (SIVA1) from Homo sapiens (Human).